A 100-amino-acid chain; its full sequence is Urease subunit gamma (100 aa).

This sequence belongs to the urease gamma subunit family. Heterotrimer of UreA (gamma), UreB (beta) and UreC (alpha) subunits. Three heterotrimers associate to form the active enzyme.

It is found in the cytoplasm. The catalysed reaction is urea + 2 H2O + H(+) = hydrogencarbonate + 2 NH4(+). The protein operates within nitrogen metabolism; urea degradation; CO(2) and NH(3) from urea (urease route): step 1/1. The chain is Urease subunit gamma from Rhodopseudomonas palustris (strain BisB5).